The following is a 167-amino-acid chain: Myelin basic protein (167 aa).

A1 bears the N-acetylalanine mark. A phosphoserine mark is found at S7 and S12. Y14 carries the post-translational modification Phosphotyrosine. Residue T17 is modified to Phosphothreonine. At S19 the chain carries Phosphoserine. T20 bears the Phosphothreonine mark. A citrulline mark is found at R25 and R31. T35 carries the post-translational modification Phosphothreonine. S40 is subject to Phosphoserine. Residues R43 and R49 each carry the omega-N-methylarginine modification. The segment at 45–87 is induces experimental autoimmune encephalomyelitis (EAE) 1; that stretch reads FGSDRAAPKRGSGKDSHHAARTTHYGSLPQKSQRSQDENPVVH. A disordered region spans residues 46–114; sequence GSDRAAPKRG…GRGLSLSRFS (69 aa). Residue S56 is modified to Phosphoserine. The residue at position 67 (T67) is a Phosphothreonine. Y69 carries the phosphotyrosine modification. S76 is modified (phosphoserine). A phosphothreonine mark is found at T94 and T97. Q102 is modified (deamidated glutamine). The residue at position 106 (R106) is an Omega-N-methylarginine; alternate. The residue at position 106 (R106) is a Symmetric dimethylarginine; alternate. A Phosphoserine modification is found at S114. Residues 114–122 are induces experimental autoimmune encephalomyelitis (EAE) 2; that stretch reads SWGAEGQKP. An N6-acetyllysine modification is found at K121. Citrulline is present on R129. Residues 136-167 form a disordered region; the sequence is GFKGAHDAQGTLSKIFKLGGRDSRSGSPMARR. Deamidated glutamine is present on Q144. A Citrulline modification is found at R156. S158 bears the Phosphoserine mark. Position 162 is a phosphoserine; by UHMK1 (S162). R167 is subject to Citrulline.

It belongs to the myelin basic protein family. As to quaternary structure, homodimer. Post-translationally, at least 5 charge isomers; C1 (the most cationic, least modified, and most abundant form), C2, C3, C4 and C5 (the least cationic form); are produced as a result of optional post-translational modifications such as phosphorylation of serine or threonine residues, deamidation of glutamine or asparagine residues, citrullination and methylation of arginine residues. C1 and C2 are unphosphorylated, C3 and C4 are monophosphorylated and C5 is phosphorylated at two positions. Phosphorylated by TAOK2, VRK2, MAPK11, MAPK12, MAPK14 and MINK1. In terms of processing, proteolytically cleaved in B cell lysosomes by cathepsin CTSG which degrades the major immunogenic MBP epitope and prevents the activation of MBP-specific autoreactive T cells. Found in both the central and the peripheral nervous system.

The protein localises to the myelin membrane. Functionally, is, with PLP, the most abundant protein component of the myelin membrane in the CNS. Has a role in both the formation and stabilization of this compact multilayer arrangement of bilayers. Each splice variant and charge isomer may have a specialized function in the assembly of an optimized, biochemically functional myelin membrane. In Cavia porcellus (Guinea pig), this protein is Myelin basic protein (MBP).